The sequence spans 139 residues: Probable trafficking protein particle complex subunit 2 (139 aa).

This sequence belongs to the TRAPP small subunits family. Sedlin subfamily. Part of the multisubunit TRAPP (transport protein particle) complex.

It localises to the cytoplasm. It is found in the perinuclear region. Its subcellular location is the endoplasmic reticulum. The protein resides in the golgi apparatus. May play a role in vesicular transport from endoplasmic reticulum to Golgi. Involved in dsRNA uptake. In Drosophila melanogaster (Fruit fly), this protein is Probable trafficking protein particle complex subunit 2.